Here is a 467-residue protein sequence, read N- to C-terminus: ATP synthase subunit beta (467 aa).

An ATP-binding site is contributed by 156–163 (GGAGVGKT).

It belongs to the ATPase alpha/beta chains family. As to quaternary structure, F-type ATPases have 2 components, CF(1) - the catalytic core - and CF(0) - the membrane proton channel. CF(1) has five subunits: alpha(3), beta(3), gamma(1), delta(1), epsilon(1). CF(0) has three main subunits: a(1), b(2) and c(9-12). The alpha and beta chains form an alternating ring which encloses part of the gamma chain. CF(1) is attached to CF(0) by a central stalk formed by the gamma and epsilon chains, while a peripheral stalk is formed by the delta and b chains.

The protein localises to the cell inner membrane. The catalysed reaction is ATP + H2O + 4 H(+)(in) = ADP + phosphate + 5 H(+)(out). Its function is as follows. Produces ATP from ADP in the presence of a proton gradient across the membrane. The catalytic sites are hosted primarily by the beta subunits. This is ATP synthase subunit beta from Cupriavidus metallidurans (strain ATCC 43123 / DSM 2839 / NBRC 102507 / CH34) (Ralstonia metallidurans).